A 620-amino-acid chain; its full sequence is Protein AFR1 (620 aa).

A compositionally biased stretch (polar residues) spans 1–12; sequence MEGSYLSAQENQ. The tract at residues 1-20 is disordered; that stretch reads MEGSYLSAQENQPIPERLIP. Phosphoserine is present on residues serine 472 and serine 526.

To yeast YER158C.

Its function is as follows. Acts in conjunction with the alpha-factor receptor to promote morphogenesis and adaptation. This is Protein AFR1 (AFR1) from Saccharomyces cerevisiae (strain ATCC 204508 / S288c) (Baker's yeast).